Reading from the N-terminus, the 725-residue chain is Putative oligopeptide transporter YGL114W (725 aa).

Transmembrane regions (helical) follow at residues 28-48 (ATIA…QFGL), 134-154 (FREL…FAVP), 254-274 (IIIL…SYFV), 353-373 (WILW…FIVV), 449-469 (ISGC…LFGI), 472-492 (IPLY…ILGI), 564-584 (FCAQ…MYLC), 644-664 (YGYG…GIFN), and 697-717 (IVFS…NMLF).

This sequence belongs to the oligopeptide OPT transporter family.

Its subcellular location is the membrane. The sequence is that of Putative oligopeptide transporter YGL114W from Saccharomyces cerevisiae (strain ATCC 204508 / S288c) (Baker's yeast).